The sequence spans 99 residues: NADH-quinone oxidoreductase subunit K (99 aa).

The next 3 membrane-spanning stretches (helical) occupy residues 2–22, 28–48, and 60–80; these read PVEYYLWLAAILFGIGLLGVL, LILMMSVELMLNAANLTFLAF, and IAFFVIAVAAAEAAVGLAVVI.

Belongs to the complex I subunit 4L family. NDH-1 is composed of 14 different subunits. Subunits NuoA, H, J, K, L, M, N constitute the membrane sector of the complex.

It localises to the cell inner membrane. The enzyme catalyses a quinone + NADH + 5 H(+)(in) = a quinol + NAD(+) + 4 H(+)(out). In terms of biological role, NDH-1 shuttles electrons from NADH, via FMN and iron-sulfur (Fe-S) centers, to quinones in the respiratory chain. The immediate electron acceptor for the enzyme in this species is believed to be ubiquinone. Couples the redox reaction to proton translocation (for every two electrons transferred, four hydrogen ions are translocated across the cytoplasmic membrane), and thus conserves the redox energy in a proton gradient. This chain is NADH-quinone oxidoreductase subunit K, found in Anaeromyxobacter dehalogenans (strain 2CP-1 / ATCC BAA-258).